The chain runs to 387 residues: Gibberellic acid methyltransferase 2 (387 aa).

S-adenosyl-L-homocysteine is bound at residue Y33. Residue Q40 coordinates gibberellin A4. Residues C74, N79, D113, L114, S146, and F147 each coordinate S-adenosyl-L-homocysteine. Residues H167 and W168 each coordinate gibberellin A4. Mg(2+) is bound by residues N185, R275, D276, F278, and N279.

It belongs to the methyltransferase superfamily. Type-7 methyltransferase family. SABATH subfamily. Requires Mg(2+) as cofactor. Expressed in siliques and germinating seeds. Not detected in leaves, stems, flowers and roots.

It carries out the reaction gibberellin A4 + S-adenosyl-L-methionine = O-methyl gibberellin A4 + S-adenosyl-L-homocysteine. With respect to regulation, down-regulated by Zn(2+), Cu(2+) and Fe(3+). No effect of K(+), NH(4+), Na(+), Ca(2+), Mg(2+), Mn(2+) and Fe(2+). Functionally, methylates the carboxyl group of several gibberellins (GAs). Substrate preference is GA4 &gt; GA34 &gt; GA9 &gt; GA3 &gt; GA1 &gt; GA51 &gt; GA20. No activity with diterpenes abietic acid and ent-kaurenoic acid. This Arabidopsis thaliana (Mouse-ear cress) protein is Gibberellic acid methyltransferase 2 (GAMT2).